A 499-amino-acid chain; its full sequence is Bifunctional purine biosynthesis protein PurH (499 aa).

In terms of domain architecture, MGS-like spans Met1–Thr144.

It belongs to the PurH family.

The catalysed reaction is (6R)-10-formyltetrahydrofolate + 5-amino-1-(5-phospho-beta-D-ribosyl)imidazole-4-carboxamide = 5-formamido-1-(5-phospho-D-ribosyl)imidazole-4-carboxamide + (6S)-5,6,7,8-tetrahydrofolate. It carries out the reaction IMP + H2O = 5-formamido-1-(5-phospho-D-ribosyl)imidazole-4-carboxamide. It functions in the pathway purine metabolism; IMP biosynthesis via de novo pathway; 5-formamido-1-(5-phospho-D-ribosyl)imidazole-4-carboxamide from 5-amino-1-(5-phospho-D-ribosyl)imidazole-4-carboxamide (10-formyl THF route): step 1/1. The protein operates within purine metabolism; IMP biosynthesis via de novo pathway; IMP from 5-formamido-1-(5-phospho-D-ribosyl)imidazole-4-carboxamide: step 1/1. The chain is Bifunctional purine biosynthesis protein PurH from Clostridium botulinum (strain Loch Maree / Type A3).